We begin with the raw amino-acid sequence, 314 residues long: Hydroxyethylthiazole kinase (314 aa).

A substrate-binding site is contributed by methionine 70. Positions 145 and 217 each coordinate ATP. Glycine 244 is a substrate binding site.

The protein belongs to the Thz kinase family. Mg(2+) is required as a cofactor.

It carries out the reaction 5-(2-hydroxyethyl)-4-methylthiazole + ATP = 4-methyl-5-(2-phosphooxyethyl)-thiazole + ADP + H(+). It functions in the pathway cofactor biosynthesis; thiamine diphosphate biosynthesis; 4-methyl-5-(2-phosphoethyl)-thiazole from 5-(2-hydroxyethyl)-4-methylthiazole: step 1/1. Its function is as follows. Catalyzes the phosphorylation of the hydroxyl group of 4-methyl-5-beta-hydroxyethylthiazole (THZ). The sequence is that of Hydroxyethylthiazole kinase from Bifidobacterium longum (strain NCC 2705).